Here is a 333-residue protein sequence, read N- to C-terminus: Protoheme IX farnesyltransferase (333 aa).

The next 8 membrane-spanning stretches (helical) occupy residues 31 to 51 (VMSL…APIH), 52 to 72 (PVLA…SGAL), 115 to 135 (MFLG…TIVF), 152 to 172 (IVIG…AATG), 178 to 198 (AWLM…ALSL), 223 to 243 (KQIL…VLTG), 244 to 264 (LGGP…LLLA), and 303 to 323 (LFAF…GEAV).

Belongs to the UbiA prenyltransferase family. Protoheme IX farnesyltransferase subfamily.

Its subcellular location is the cell inner membrane. The enzyme catalyses heme b + (2E,6E)-farnesyl diphosphate + H2O = Fe(II)-heme o + diphosphate. It functions in the pathway porphyrin-containing compound metabolism; heme O biosynthesis; heme O from protoheme: step 1/1. Its function is as follows. Converts heme B (protoheme IX) to heme O by substitution of the vinyl group on carbon 2 of heme B porphyrin ring with a hydroxyethyl farnesyl side group. The sequence is that of Protoheme IX farnesyltransferase from Caulobacter vibrioides (strain ATCC 19089 / CIP 103742 / CB 15) (Caulobacter crescentus).